A 475-amino-acid chain; its full sequence is ATP synthase subunit beta, chloroplastic (475 aa).

G156–T163 is a binding site for ATP.

The protein belongs to the ATPase alpha/beta chains family. In terms of assembly, F-type ATPases have 2 components, CF(1) - the catalytic core - and CF(0) - the membrane proton channel. CF(1) has five subunits: alpha(3), beta(3), gamma(1), delta(1), epsilon(1). CF(0) has four main subunits: a(1), b(1), b'(1) and c(9-12).

Its subcellular location is the plastid. It localises to the chloroplast thylakoid membrane. It catalyses the reaction ATP + H2O + 4 H(+)(in) = ADP + phosphate + 5 H(+)(out). Functionally, produces ATP from ADP in the presence of a proton gradient across the membrane. The catalytic sites are hosted primarily by the beta subunits. The protein is ATP synthase subunit beta, chloroplastic of Gracilaria tenuistipitata var. liui (Red alga).